The following is an 83-amino-acid chain: Putative membrane protein insertion efficiency factor (83 aa).

Residues 63–83 (GGNDPVPDHFSLRRNKTDISD) form a disordered region. Over residues 68-83 (VPDHFSLRRNKTDISD) the composition is skewed to basic and acidic residues.

The protein belongs to the UPF0161 family.

The protein resides in the cell membrane. Could be involved in insertion of integral membrane proteins into the membrane. The polypeptide is Putative membrane protein insertion efficiency factor (Streptococcus agalactiae serotype III (strain NEM316)).